Here is a 551-residue protein sequence, read N- to C-terminus: 2-(3-amino-3-carboxypropyl)histidine synthase subunit 2 (551 aa).

[4Fe-4S] cluster-binding residues include Cys-116, Cys-137, and Cys-371.

Belongs to the DPH1/DPH2 family. DPH2 subfamily. In terms of assembly, component of the 2-(3-amino-3-carboxypropyl)histidine synthase complex composed of DPH1, DPH2, DPH3 and a NADH-dependent reductase, predominantly CBR1. [4Fe-4S] cluster serves as cofactor.

Its subcellular location is the cytoplasm. The protein operates within protein modification; peptidyl-diphthamide biosynthesis. Functionally, required for the first step of diphthamide biosynthesis, a post-translational modification of histidine which occurs in elongation factor 2. DPH1 and DPH2 transfer a 3-amino-3-carboxypropyl (ACP) group from S-adenosyl-L-methionine (SAM) to a histidine residue, the reaction is assisted by a reduction system comprising DPH3 and a NADH-dependent reductase, predominantly CBR1. Facilitates the reduction of the catalytic iron-sulfur cluster found in the DPH1 subunit. This chain is 2-(3-amino-3-carboxypropyl)histidine synthase subunit 2 (DPH2), found in Candida glabrata (strain ATCC 2001 / BCRC 20586 / JCM 3761 / NBRC 0622 / NRRL Y-65 / CBS 138) (Yeast).